Here is a 51-residue protein sequence, read N- to C-terminus: Large ribosomal subunit protein eL39 (51 aa).

This sequence belongs to the eukaryotic ribosomal protein eL39 family.

This is Large ribosomal subunit protein eL39 from Methanococcoides burtonii (strain DSM 6242 / NBRC 107633 / OCM 468 / ACE-M).